The primary structure comprises 630 residues: Protein mono-ADP-ribosyltransferase PARP6 (630 aa).

C237 is subject to ADP-ribosylcysteine. One can recognise a PARP catalytic domain in the interval 394–620; the sequence is EMTQGSYLEI…QDPKIQKEIM (227 aa). Position 600 is an ADP-ribosyl aspartic acid (D600).

This sequence belongs to the ARTD/PARP family. Auto-mono-ADP-ribosylated.

The catalysed reaction is L-aspartyl-[protein] + NAD(+) = 4-O-(ADP-D-ribosyl)-L-aspartyl-[protein] + nicotinamide. It catalyses the reaction L-cysteinyl-[protein] + NAD(+) = S-(ADP-D-ribosyl)-L-cysteinyl-[protein] + nicotinamide + H(+). Functionally, mono-ADP-ribosyltransferase that mediates mono-ADP-ribosylation of target proteins. The chain is Protein mono-ADP-ribosyltransferase PARP6 from Mus musculus (Mouse).